Reading from the N-terminus, the 350-residue chain is MSHQTGIQASEDVKEIFARARNGKYRLLKISIENEQLVIGSYSQPSDSWDKDYDSFVLPLLEDKQPCYILFRLDSQNAQGYEWIFIAWSPDHSHVRQKMLYAATRATLKKEFGGGHIKDEVFGTVKEDVSLHGYKKYLLSQSSPAPLTAAEEELRQIKINEVQTDVGVDTKHQTLQGVAFPISREAFQALEKLNNRQLNYVQLEIDIKNEIIILANTTNTELKDLPKRIPKDSARYHFFLYKHSHEGDYLESIVFIYSMPGYTCSIRERMLYSSCKSRLLEIVERQLQMDVIRKIEIDNGDELTADFLYEEVHPKQHAHKQSFAKPKGPAGKRGIRRLIRGPAETEATTD.

An N-acetylserine modification is found at Ser2. The ADF-H 1 domain occupies 2–139; that stretch reads SHQTGIQASE…SLHGYKKYLL (138 aa). Phosphoserine is present on residues Ser143 and Ser277. Residues 175–313 enclose the ADF-H 2 domain; sequence LQGVAFPISR…TADFLYEEVH (139 aa). Residue Tyr309 is modified to Phosphotyrosine. Residues 316–350 form a disordered region; that stretch reads QHAHKQSFAKPKGPAGKRGIRRLIRGPAETEATTD. Thr349 carries the phosphothreonine modification.

This sequence belongs to the actin-binding proteins ADF family. Twinfilin subfamily. As to quaternary structure, interacts with G-actin; ADP-actin form and capping protein (CP). May also be able to interact with TWF2 and phosphoinositides, PI(4,5)P2. When bound to PI(4,5)P2, it is down-regulated. Interacts with ACTG1. In terms of processing, phosphorylated on serine and threonine residues. Expressed at high levels in the colon, testis, ovary, prostate and lung. Expressed at lower levels in the brain, bladder and heart. Not detected in liver.

It is found in the cytoplasm. The protein resides in the cytoskeleton. In terms of biological role, actin-binding protein involved in motile and morphological processes. Inhibits actin polymerization, likely by sequestering G-actin. By capping the barbed ends of filaments, it also regulates motility. Seems to play an important role in clathrin-mediated endocytosis and distribution of endocytic organelles. The polypeptide is Twinfilin-1 (TWF1) (Homo sapiens (Human)).